Here is a 237-residue protein sequence, read N- to C-terminus: Cuticlin-like protein 19 (237 aa).

Residues 1–20 (MVEYNRIFCVLVIFSTTIKC) form the signal peptide.

As to quaternary structure, interacts with vps-51 and vps-52. As to expression, expression detected in motor neurons.

The protein resides in the golgi apparatus. Its subcellular location is the trans-Golgi network. The chain is Cuticlin-like protein 19 (cutl-19) from Caenorhabditis elegans.